The primary structure comprises 787 residues: MTDYSSKEYFDKLEKFWRAANYLSVGQLYLKDNPLLKRDIKPEDVKVHPIGHWGTIPGQNYIYAHLNRVINKYGVNMFYVEGPGHGGQVMVSNSYLDGSYTEAYPAITQDEEGMKKLFKQFSWPGGVASHAAPVTPGSIHEGGELGYSLSHGVGAILDNPDQIAAVVVGDGEAETGPLAASWQHNRFINPITDGAVLPILDINGYKLSNPSLTSRMSDEELTEFFHGQHWDPYFVEGDDSEAMDPKMAEVMDKAIEKIQEIQKNARENHDETMPYWPVIVFRSPKGWTGPKTWDNKVIEGTFRAHQIPIPVDQKNLEHVDALIDWMKSYKPEELFDENGRVLPEIAEIAPKGEKRMASNPITNGGVNPTDLNLPDYRDYAVDTTKRGQNIKQDMLVWSDYLRDVITKNPTNFRMFGPDETMSNRLYGLFEVTNRQFVAPIKKDWDEALAPEGRILDAQLSEHSAEGWLETYTLTGRHGIFTSYEAFLRVVDSMITQHFKWLRKADELDWRNDYPSLNLVSTSTSFQQDHNGYTHQDPGLLTHLAEKKPEFIREYLPADANSLLAISPLVMNDRNKINLIIASKQPRPQFYSMEEAEVLAKNGLGIIDWASTTNGEEPDVVFAAAGTEPNMESLAAINILHDNFPDLKIRFINVVDLLKLQSPKVNPNGLSDEEFDRYFTKDKPVIFTFHGFEDLIRSIFFDRHNHNLHVHGYREEGDITTPFDMRVLNELDRFHLAQDTINSIPEFAEKGADFSQQMDNTLERHYQYIRDNGDDLPEVTNWTWKDVN.

The protein belongs to the XFP family. Requires thiamine diphosphate as cofactor.

This is Probable phosphoketolase from Pediococcus pentosaceus (strain ATCC 25745 / CCUG 21536 / LMG 10740 / 183-1w).